Consider the following 952-residue polypeptide: Lysosomal alpha-glucosidase (952 aa).

The first 27 residues, 1-27, serve as a signal peptide directing secretion; the sequence is MGVRHPPCSHRLLAVCALVSLATAALL. A propeptide spanning residues 28-69 is cleaved from the precursor; sequence GHILLHDFLLVPRELSGSSPVLEETHPAHQQGASRPGPRDAQ. The tract at residues 47–82 is disordered; the sequence is PVLEETHPAHQQGASRPGPRDAQAHPGRPRAVPTQC. Residues 80–131 enclose the P-type domain; that stretch reads TQCDVPPNSRFDCAPDKAITQEQCEARGCCYIPAKQGLQGAQMGQPWCFFPP. 3 cysteine pairs are disulfide-bonded: Cys82–Cys109, Cys92–Cys108, and Cys103–Cys127. N-linked (GlcNAc...) asparagine glycosylation is found at Asn140, Asn233, and Asn390. Asp404 provides a ligand contact to substrate. A glycan (N-linked (GlcNAc...) asparagine) is linked at Asn470. The Nucleophile role is filled by Asp518. Glu521 is a catalytic residue. Residues Cys533 and Cys558 are joined by a disulfide bond. Residues Arg600 and Asp616 each coordinate substrate. Cys647 and Cys658 are oxidised to a cystine. N-linked (GlcNAc...) asparagine glycosylation occurs at Asn652. His674 contributes to the substrate binding site. N-linked (GlcNAc...) asparagine glycans are attached at residues Asn882 and Asn925.

The protein belongs to the glycosyl hydrolase 31 family. In terms of processing, the different forms of acid glucosidase are obtained by proteolytic processing. Post-translationally, phosphorylation of mannose residues ensures efficient transport of the enzyme to the lysosomes via the mannose 6-phosphate receptor.

The protein resides in the lysosome. It is found in the lysosome membrane. It catalyses the reaction Hydrolysis of terminal, non-reducing (1-&gt;4)-linked alpha-D-glucose residues with release of alpha-D-glucose.. Functionally, essential for the degradation of glycogen in lysosomes. Has highest activity on alpha-1,4-linked glycosidic linkages, but can also hydrolyze alpha-1,6-linked glucans. The polypeptide is Lysosomal alpha-glucosidase (GAA) (Homo sapiens (Human)).